Here is a 369-residue protein sequence, read N- to C-terminus: Anhydro-N-acetylmuramic acid kinase (369 aa).

Position 12–19 (12–19 (GTSMDGVD)) interacts with ATP.

Belongs to the anhydro-N-acetylmuramic acid kinase family.

It carries out the reaction 1,6-anhydro-N-acetyl-beta-muramate + ATP + H2O = N-acetyl-D-muramate 6-phosphate + ADP + H(+). It functions in the pathway amino-sugar metabolism; 1,6-anhydro-N-acetylmuramate degradation. Its pathway is cell wall biogenesis; peptidoglycan recycling. Functionally, catalyzes the specific phosphorylation of 1,6-anhydro-N-acetylmuramic acid (anhMurNAc) with the simultaneous cleavage of the 1,6-anhydro ring, generating MurNAc-6-P. Is required for the utilization of anhMurNAc either imported from the medium or derived from its own cell wall murein, and thus plays a role in cell wall recycling. The chain is Anhydro-N-acetylmuramic acid kinase from Shewanella sp. (strain W3-18-1).